The chain runs to 64 residues: Potassium channel toxin kappa-KTx 3.4 (64 aa).

The signal sequence occupies residues 1 to 26 (MKSTLMTASLLILVLLSIIDYASVYA). The propeptide occupies 27 to 36 (EFIDSEISLE). 2 cysteine pairs are disulfide-bonded: Cys43/Cys61 and Cys47/Cys57.

It belongs to the short scorpion toxin superfamily. Potassium channel inhibitor kappa-KTx family. Kappa-KTx 3 subfamily. In terms of tissue distribution, expressed by the venom gland.

It localises to the secreted. In terms of biological role, potassium channel inhibitor (Kv). This chain is Potassium channel toxin kappa-KTx 3.4, found in Heterometrus petersii (Asian forest scorpion).